We begin with the raw amino-acid sequence, 105 residues long: Phosphoribosyl-ATP pyrophosphatase (105 aa).

This sequence belongs to the PRA-PH family.

Its subcellular location is the cytoplasm. It carries out the reaction 1-(5-phospho-beta-D-ribosyl)-ATP + H2O = 1-(5-phospho-beta-D-ribosyl)-5'-AMP + diphosphate + H(+). It functions in the pathway amino-acid biosynthesis; L-histidine biosynthesis; L-histidine from 5-phospho-alpha-D-ribose 1-diphosphate: step 2/9. This is Phosphoribosyl-ATP pyrophosphatase from Ruegeria sp. (strain TM1040) (Silicibacter sp.).